The primary structure comprises 259 residues: DNA repair protein RecO (259 aa).

This sequence belongs to the RecO family.

Involved in DNA repair and RecF pathway recombination. The chain is DNA repair protein RecO from Chloroherpeton thalassium (strain ATCC 35110 / GB-78).